The chain runs to 2381 residues: Myb-like protein U (2381 aa).

4 disordered regions span residues 1-85 (MKTK…TSNN), 148-167 (SSSG…GGIS), 178-492 (PTIP…NNNN), and 641-696 (NINN…GDEM). Low complexity-rich tracts occupy residues 30 to 41 (SKSSSKVSQSSS) and 64 to 79 (TIPA…PTLT). Low complexity-rich tracts occupy residues 192–204 (NLSS…NILS), 225–261 (ENVN…SSSS), and 291–315 (SNKS…NNKK). Positions 331-343 (SEYDSSDSSDMDL) are enriched in acidic residues. Low complexity predominate over residues 363–405 (TTKPNNSNSNNNNNNNSINSTIPASNNINSANNSKTTNKNITS). The segment covering 421 to 430 (SETPILTSVK) has biased composition (polar residues). Low complexity-rich tracts occupy residues 435 to 492 (QQIP…NNNN) and 641 to 692 (NINN…NNNN). Residues 856 to 899 (WHEEEKLLFRELFCAYGRDWQMVSTLMCGTKSPTQIKNFYYDVR) form the Myb-like domain. Disordered stretches follow at residues 932–1024 (KPEQ…ETPP), 1068–1093 (INQS…NINP), 1145–1207 (TSST…SNQE), 1295–1339 (STTT…PPID), 1422–1474 (PYYP…LSTP), 1597–1647 (PPAT…TTIV), 1667–1849 (PIVK…PPPV), 1961–1985 (TTVP…NGLA), 2055–2106 (TSTV…NGLT), and 2122–2280 (LSGI…NKND). Residues 936–953 (NVNSNNNNNGGGNSLKDG) show a composition bias toward low complexity. The segment covering 982-995 (VKKKSRTASKRSFR) has biased composition (basic residues). The segment covering 1000–1013 (ANETNRTPKNQPKP) has biased composition (polar residues). Low complexity-rich tracts occupy residues 1069-1092 (NQSS…NNIN), 1145-1186 (TSST…TGSA), 1195-1205 (VNNNNNNNLSN), and 1306-1325 (TTTP…QLQQ). Residues 1326–1337 (LPPPPPPPPKPP) are compositionally biased toward pro residues. A compositionally biased stretch (low complexity) spans 1427-1474 (PSSTTTNSATSTPTSTPTSTPSTSASTLTPTSTPTSTPVPAPTSLSTP). Over residues 1597-1606 (PPATITPILP) the composition is skewed to pro residues. Residues 1618 to 1637 (SSSSSSSSSSSSSSSSSSSS) show a composition bias toward low complexity. 2 stretches are compositionally biased toward polar residues: residues 1638-1647 (TTKNNSTTIV) and 1671-1701 (QESN…KTLL). Composition is skewed to low complexity over residues 1702–1735 (PSNS…NPSS) and 1743–1809 (TSNK…TLKP). Polar residues predominate over residues 1829–1844 (APTNSTNQNTIPNATT). 2 stretches are compositionally biased toward low complexity: residues 1961-1970 (TTVPGTTTTT) and 2065-2097 (NNMT…QQST). Over residues 2129 to 2138 (NTLSGKSPTP) the composition is skewed to polar residues. Low complexity predominate over residues 2154–2209 (PSLSSSSANPISITNNTTSLSQQSNTTNTMPSTVSLSSGSTSINSNSSNSKSLRSP). Basic and acidic residues predominate over residues 2210–2278 (KSSDNDGKES…NNNDKFDSNK (69 aa)).

This Dictyostelium discoideum (Social amoeba) protein is Myb-like protein U (mybU).